The sequence spans 245 residues: Ribonuclease PH (245 aa).

Phosphate contacts are provided by residues Arg-93 and 131–133 (GTR).

This sequence belongs to the RNase PH family. As to quaternary structure, homohexameric ring arranged as a trimer of dimers.

The enzyme catalyses tRNA(n+1) + phosphate = tRNA(n) + a ribonucleoside 5'-diphosphate. In terms of biological role, phosphorolytic 3'-5' exoribonuclease that plays an important role in tRNA 3'-end maturation. Removes nucleotide residues following the 3'-CCA terminus of tRNAs; can also add nucleotides to the ends of RNA molecules by using nucleoside diphosphates as substrates, but this may not be physiologically important. Probably plays a role in initiation of 16S rRNA degradation (leading to ribosome degradation) during starvation. In Corynebacterium glutamicum (strain ATCC 13032 / DSM 20300 / JCM 1318 / BCRC 11384 / CCUG 27702 / LMG 3730 / NBRC 12168 / NCIMB 10025 / NRRL B-2784 / 534), this protein is Ribonuclease PH.